Consider the following 621-residue polypeptide: Acetolactate synthase (621 aa).

Residues 1–19 (MSAPTRRPAPDAPGAAGIA) show a composition bias toward low complexity. Residues 1 to 39 (MSAPTRRPAPDAPGAAGIAPAPPAPAAKPAAGKPKRIGP) are disordered. Residue glutamate 89 coordinates thiamine diphosphate. Residues arginine 190, 296-317 (HGTV…LGTR), and 339-358 (DIDP…IVGD) contribute to the FAD site. The segment at 432–512 (HDQMWAAQFI…IKVALINNGN (81 aa)) is thiamine pyrophosphate binding. Residues aspartate 483 and asparagine 510 each contribute to the Mg(2+) site.

The protein belongs to the TPP enzyme family. It depends on Mg(2+) as a cofactor. Thiamine diphosphate is required as a cofactor.

The catalysed reaction is 2 pyruvate + H(+) = (2S)-2-acetolactate + CO2. Its pathway is amino-acid biosynthesis; L-isoleucine biosynthesis; L-isoleucine from 2-oxobutanoate: step 1/4. The protein operates within amino-acid biosynthesis; L-valine biosynthesis; L-valine from pyruvate: step 1/4. This chain is Acetolactate synthase (ilvB), found in Mycobacterium avium.